The sequence spans 772 residues: Ion-translocating oxidoreductase complex subunit C (772 aa).

4Fe-4S ferredoxin-type domains are found at residues 369-397 (GEPQEEQSCIRCSACADACPADLLPQQLY) and 407-436 (KATTHNIADCIECGACAWVCPSNIPLVQYF). [4Fe-4S] cluster contacts are provided by Cys-377, Cys-380, Cys-383, Cys-387, Cys-416, Cys-419, Cys-422, and Cys-426. Disordered regions lie at residues 602-684 (KLEQ…DPRK), 696-717 (ARKLEQQQANAEPEEQVDPRKA), and 727-746 (KARKLEQQQANAEPEEQVDP). Residues 605–615 (QQQANAEPEQQ) are compositionally biased toward low complexity.

Belongs to the 4Fe4S bacterial-type ferredoxin family. RnfC subfamily. The complex is composed of six subunits: RsxA, RsxB, RsxC, RsxD, RsxE and RsxG. Requires [4Fe-4S] cluster as cofactor.

The protein localises to the cell inner membrane. Part of a membrane-bound complex that couples electron transfer with translocation of ions across the membrane. Required to maintain the reduced state of SoxR. In Escherichia coli O157:H7 (strain EC4115 / EHEC), this protein is Ion-translocating oxidoreductase complex subunit C.